Here is a 1002-residue protein sequence, read N- to C-terminus: Probable transport protein MmpL10 (1002 aa).

Helical transmembrane passes span 1–21 (MVGC…SLAE), 177–197 (IAVM…TMLL), 199–219 (LVTI…VSLV), 228–248 (AIVL…VFLI), 268–288 (AMMS…ITFL), 306–326 (AIGI…ILVL), 358–378 (YLGA…LAHF), 806–826 (IVAV…RAIV), 835–855 (VVIS…VFLG), 862–882 (VPGL…MLLA), 901–921 (VRCT…SMSG), and 923–943 (LFSS…GILI).

The protein belongs to the resistance-nodulation-cell division (RND) (TC 2.A.6) family. MmpL subfamily.

The protein resides in the cell membrane. This Mycobacterium bovis (strain ATCC BAA-935 / AF2122/97) protein is Probable transport protein MmpL10 (mmpL10).